The following is a 278-amino-acid chain: NAD kinase (278 aa).

The active-site Proton acceptor is aspartate 56. Residues 56–57 (DG), 132–133 (NE), arginine 158, aspartate 160, and 171–176 (TAYNKS) contribute to the NAD(+) site.

It belongs to the NAD kinase family. Requires a divalent metal cation as cofactor.

It localises to the cytoplasm. The catalysed reaction is NAD(+) + ATP = ADP + NADP(+) + H(+). Its function is as follows. Involved in the regulation of the intracellular balance of NAD and NADP, and is a key enzyme in the biosynthesis of NADP. Catalyzes specifically the phosphorylation on 2'-hydroxyl of the adenosine moiety of NAD to yield NADP. The protein is NAD kinase of Streptococcus agalactiae serotype V (strain ATCC BAA-611 / 2603 V/R).